Consider the following 238-residue polypeptide: Small ribosomal subunit protein uS2 (238 aa).

Belongs to the universal ribosomal protein uS2 family.

The polypeptide is Small ribosomal subunit protein uS2 (Chloroflexus aggregans (strain MD-66 / DSM 9485)).